A 184-amino-acid polypeptide reads, in one-letter code: Photosystem I assembly protein Ycf4 (184 aa).

Transmembrane regions (helical) follow at residues 19–39 (ISNL…FLVG) and 57–77 (IIFF…LFIS).

The protein belongs to the Ycf4 family.

The protein localises to the plastid thylakoid membrane. Its function is as follows. Seems to be required for the assembly of the photosystem I complex. This is Photosystem I assembly protein Ycf4 from Cuscuta exaltata (Tall dodder).